Reading from the N-terminus, the 36-residue chain is Photosystem I reaction center subunit VIII (36 aa).

Residues 9-29 (ILVPLVGLIFPALSMALLFIY) form a helical membrane-spanning segment.

This sequence belongs to the PsaI family.

Its subcellular location is the plastid. The protein resides in the chloroplast thylakoid membrane. Its function is as follows. May help in the organization of the PsaL subunit. In Pyropia yezoensis (Susabi-nori), this protein is Photosystem I reaction center subunit VIII.